The primary structure comprises 188 residues: dCTP deaminase (188 aa).

Residues 111–116, 135–137, Gln-156, Tyr-170, and Gln-180 contribute to the dCTP site; these read KSTYAR and TLE. The active-site Proton donor/acceptor is the Glu-137.

It belongs to the dCTP deaminase family. As to quaternary structure, homotrimer.

It carries out the reaction dCTP + H2O + H(+) = dUTP + NH4(+). It participates in pyrimidine metabolism; dUMP biosynthesis; dUMP from dCTP (dUTP route): step 1/2. Functionally, catalyzes the deamination of dCTP to dUTP. This Pseudomonas fluorescens (strain SBW25) protein is dCTP deaminase.